The chain runs to 70 residues: Small ribosomal subunit protein bS21 (70 aa).

Belongs to the bacterial ribosomal protein bS21 family.

The polypeptide is Small ribosomal subunit protein bS21 (Methylobacillus flagellatus (strain ATCC 51484 / DSM 6875 / VKM B-1610 / KT)).